The sequence spans 348 residues: tRNA N6-adenosine threonylcarbamoyltransferase (348 aa).

Fe cation-binding residues include His115 and His119. Substrate-binding positions include 137–141 (LASGG), Asp170, Gly183, and Asn281. Residue Asp309 coordinates Fe cation.

This sequence belongs to the KAE1 / TsaD family. Requires Fe(2+) as cofactor.

Its subcellular location is the cytoplasm. It carries out the reaction L-threonylcarbamoyladenylate + adenosine(37) in tRNA = N(6)-L-threonylcarbamoyladenosine(37) in tRNA + AMP + H(+). Its function is as follows. Required for the formation of a threonylcarbamoyl group on adenosine at position 37 (t(6)A37) in tRNAs that read codons beginning with adenine. Is involved in the transfer of the threonylcarbamoyl moiety of threonylcarbamoyl-AMP (TC-AMP) to the N6 group of A37, together with TsaE and TsaB. TsaD likely plays a direct catalytic role in this reaction. The polypeptide is tRNA N6-adenosine threonylcarbamoyltransferase (Methylobacterium sp. (strain 4-46)).